Consider the following 130-residue polypeptide: Small ribosomal subunit protein uS11 (130 aa).

Belongs to the universal ribosomal protein uS11 family. As to quaternary structure, part of the 30S ribosomal subunit. Interacts with proteins S7 and S18. Binds to IF-3.

Located on the platform of the 30S subunit, it bridges several disparate RNA helices of the 16S rRNA. Forms part of the Shine-Dalgarno cleft in the 70S ribosome. This is Small ribosomal subunit protein uS11 from Prochlorococcus marinus (strain MIT 9303).